The primary structure comprises 309 residues: ATP synthase gamma chain (309 aa).

This sequence belongs to the ATPase gamma chain family. As to quaternary structure, F-type ATPases have 2 components, CF(1) - the catalytic core - and CF(0) - the membrane proton channel. CF(1) has five subunits: alpha(3), beta(3), gamma(1), delta(1), epsilon(1). CF(0) has three main subunits: a, b and c.

It is found in the cell membrane. Its function is as follows. Produces ATP from ADP in the presence of a proton gradient across the membrane. The gamma chain is believed to be important in regulating ATPase activity and the flow of protons through the CF(0) complex. The polypeptide is ATP synthase gamma chain (Ligilactobacillus salivarius (strain UCC118) (Lactobacillus salivarius)).